We begin with the raw amino-acid sequence, 129 residues long: Small ribosomal subunit protein uS11 (129 aa).

It belongs to the universal ribosomal protein uS11 family. In terms of assembly, part of the 30S ribosomal subunit. Interacts with proteins S7 and S18. Binds to IF-3.

Functionally, located on the platform of the 30S subunit, it bridges several disparate RNA helices of the 16S rRNA. Forms part of the Shine-Dalgarno cleft in the 70S ribosome. The polypeptide is Small ribosomal subunit protein uS11 (Halalkalibacterium halodurans (strain ATCC BAA-125 / DSM 18197 / FERM 7344 / JCM 9153 / C-125) (Bacillus halodurans)).